Here is a 553-residue protein sequence, read N- to C-terminus: uncharacterized protein (553 aa).

5 consecutive transmembrane segments (helical) span residues 13–30, 37–59, 69–91, 98–120, and 157–179; these read ALQA…GLGL, GISL…GLSI, SFGL…FSSF, LNML…SYTT, and TPAL…AVLL. 2 consecutive RCK C-terminal domains span residues 190–273 and 281–365; these read LEVQ…LFGE and KEDI…VLGN. 6 helical membrane passes run 375 to 397, 402 to 424, 436 to 458, 468 to 490, 497 to 514, and 529 to 551; these read LVAV…SIPG, VRLG…GPRL, LMLR…GAHF, LLWI…FFAF, FGSV…PMAL, and AYAT…LLMF.

This sequence belongs to the AAE transporter (TC 2.A.81) family.

The protein localises to the cell membrane. This is an uncharacterized protein from Bacteroides fragilis (strain YCH46).